Here is a 561-residue protein sequence, read N- to C-terminus: Type II methyltransferase M.BstVI (561 aa).

Belongs to the N(4)/N(6)-methyltransferase family.

It carries out the reaction a 2'-deoxyadenosine in DNA + S-adenosyl-L-methionine = an N(6)-methyl-2'-deoxyadenosine in DNA + S-adenosyl-L-homocysteine + H(+). Functionally, a gamma subtype methylase, recognizes the double-stranded sequence 5'-CTCGAG-3', methylates A-5 on both strands, and protects the DNA from cleavage by the BstVI endonuclease. This Geobacillus stearothermophilus (Bacillus stearothermophilus) protein is Type II methyltransferase M.BstVI.